The primary structure comprises 362 residues: Adenosine deaminase (362 aa).

2 residues coordinate Zn(2+): His19 and His21. Residues His21, Asp23, and Gly181 each coordinate substrate. Zn(2+) is bound at residue His208. Glu211 functions as the Proton donor in the catalytic mechanism. Asp300 provides a ligand contact to Zn(2+).

It belongs to the metallo-dependent hydrolases superfamily. Adenosine and AMP deaminases family. Adenosine deaminase subfamily. Requires Zn(2+) as cofactor.

It carries out the reaction adenosine + H2O + H(+) = inosine + NH4(+). The catalysed reaction is 2'-deoxyadenosine + H2O + H(+) = 2'-deoxyinosine + NH4(+). Catalyzes the hydrolytic deamination of adenosine and 2-deoxyadenosine. The polypeptide is Adenosine deaminase (Mycolicibacterium vanbaalenii (strain DSM 7251 / JCM 13017 / BCRC 16820 / KCTC 9966 / NRRL B-24157 / PYR-1) (Mycobacterium vanbaalenii)).